The chain runs to 665 residues: Long chain acyl-CoA synthetase 3 (665 aa).

228–239 (IMYTSGTTGDPK) provides a ligand contact to ATP. The tract at residues 495-519 (DGWLHTGDVGEWQPDGAMKIIDRKK) is fatty acid-binding.

It belongs to the ATP-dependent AMP-binding enzyme family. The cofactor is Mg(2+).

The enzyme catalyses a long-chain fatty acid + ATP + CoA = a long-chain fatty acyl-CoA + AMP + diphosphate. The protein operates within lipid metabolism; fatty acid metabolism. Its function is as follows. Activation of long-chain fatty acids for both synthesis of cellular lipids, and degradation via beta-oxidation. Preferentially uses palmitate, palmitoleate, oleate and linoleate. The chain is Long chain acyl-CoA synthetase 3 (LACS3) from Arabidopsis thaliana (Mouse-ear cress).